The primary structure comprises 297 residues: Bifunctional protein FolD (297 aa).

NADP(+) is bound by residues 168–170, Thr-197, and Val-238; that span reads GRS.

The protein belongs to the tetrahydrofolate dehydrogenase/cyclohydrolase family. As to quaternary structure, homodimer.

It carries out the reaction (6R)-5,10-methylene-5,6,7,8-tetrahydrofolate + NADP(+) = (6R)-5,10-methenyltetrahydrofolate + NADPH. It catalyses the reaction (6R)-5,10-methenyltetrahydrofolate + H2O = (6R)-10-formyltetrahydrofolate + H(+). It functions in the pathway one-carbon metabolism; tetrahydrofolate interconversion. Its function is as follows. Catalyzes the oxidation of 5,10-methylenetetrahydrofolate to 5,10-methenyltetrahydrofolate and then the hydrolysis of 5,10-methenyltetrahydrofolate to 10-formyltetrahydrofolate. The chain is Bifunctional protein FolD from Lawsonia intracellularis (strain PHE/MN1-00).